Consider the following 176-residue polypeptide: Peptide deformylase (176 aa).

2 residues coordinate Fe cation: C94 and H136. E137 is an active-site residue. H140 is a Fe cation binding site.

Belongs to the polypeptide deformylase family. It depends on Fe(2+) as a cofactor.

The enzyme catalyses N-terminal N-formyl-L-methionyl-[peptide] + H2O = N-terminal L-methionyl-[peptide] + formate. Removes the formyl group from the N-terminal Met of newly synthesized proteins. Requires at least a dipeptide for an efficient rate of reaction. N-terminal L-methionine is a prerequisite for activity but the enzyme has broad specificity at other positions. This chain is Peptide deformylase, found in Bartonella henselae (strain ATCC 49882 / DSM 28221 / CCUG 30454 / Houston 1) (Rochalimaea henselae).